The chain runs to 644 residues: Zinc finger protein 568 (644 aa).

Positions 48–119 (VTFKDVAVDL…EEEMFGRHCP (72 aa)) constitute a KRAB domain. 15 C2H2-type zinc fingers span residues 222-244 (FKCNQCGQDFSHKFDLIRHERIH), 250-272 (YECKECGKAFSRKENLITHQKIH), 278-300 (YKCNECGKAFIQMSNLIRHHRIH), 306-328 (YACKDCWKAFSQKSNLIEHERIH), 334-356 (YECKECGKSFSQKQNLIEHEKIH), 362-384 (YACNECGRAFSRMSSVTLHMRSH), 390-412 (YKCNKCGKAFSQCSVFIIHMRSH), 418-440 (YVCSECGKAFSQSSSLTVHMRNH), 446-468 (YECKECGKAFSRKENLITHQKIH), 474-496 (YECSECGKAFIQMSNLIRHQRIH), 502-524 (YACTVCGKAFSQKSNLTEHEKIH), 530-552 (YHCNQCGKAFSQRQNLLEHEKIH), 558-580 (FKCNECGKAFSRISSLTLHVRSH), 586-608 (YECNKCGKAFSQCSLLIIHMRSH), and 614-636 (FECNECGKAFSQRASLSIHKRGH).

Belongs to the krueppel C2H2-type zinc-finger protein family. In terms of assembly, interacts with TRIM28.

It localises to the nucleus. In terms of biological role, has transcriptional repression activity, partially through the recruitment of the corepressor TRIM28 but also has repression activity independently of this interaction. Essential during embryonic development, where it acts as a direct repressor of a placental-specific transcript of IGF2 in early development and regulates convergent extension movements required for axis elongation and tissue morphogenesis in all germ layers. Also important for normal morphogenesis of extraembryonic tissues including the yolk sac, extraembryonic mesoderm and placenta. May enhance proliferation or maintenance of neural stem cells. The protein is Zinc finger protein 568 (ZNF568) of Homo sapiens (Human).